The following is a 272-amino-acid chain: FAS1 domain-containing protein YDR262W (272 aa).

Positions 1–26 (MIFNLPVSVLLYFSLIWAMEPSFVRG) are cleaved as a signal peptide. The FAS1 domain maps to 100-269 (PLSLESKLSL…GVILMVDFTL (170 aa)).

Its subcellular location is the vacuole. The sequence is that of FAS1 domain-containing protein YDR262W from Saccharomyces cerevisiae (strain ATCC 204508 / S288c) (Baker's yeast).